A 606-amino-acid polypeptide reads, in one-letter code: MGKKNKGGAPNLGRQLIKDRFGHTQRRKVDNDTMLHTTELQDGYDWGRLNLSSVTEESSFQAFLRTAELAGTEFQAEKLNITFVNPKQRVGLLSKTQEQRMHQKHDEHRDQLKIPRRPKWTKETSAEELVRAENEAFLDWRRDLALLQEDEEILMTPYEKNLEFWRQLWRVVERSDVVVQIVDARNPLLFRSADLERYVKEVEPSKMNMILVNKSDLLTEEQRRHWAEYFDSEGIRTAFYSATLVEEELKREAEECLDSFPEVQQLRRAVEEIKQSLDSVEDALNVIEQKYKTIPETQNDELPRLPGDKNSPRLLSRLELIEFLRNIYTGPRHTEQHVTVGMVGYPNVGKSSTINSLMTVKKVSVSATPGKTKRFQTLFLDKDILLCDCPGLVMPSFVLTKADMLLNGILPIDQMRDHVPAVNLLCERIPRHVLEDKYGIVIAKPLEGEDMERPPHSEELLLAYGYNRGFMTSNGQPDQARSARYVLKDYVNGRLLYAMSPPSVPQTEYHTFPERQRRVIEESQLPGQQQRAMRINKSTSKELDNQFFSDKPTHAHVKGRTNFPNVRLANDGSLVAGNDPAAKPWRHVKKERREKLRKKFSHLDEH.

The tract at residues 1–21 (MGKKNKGGAPNLGRQLIKDRF) is disordered. The 231-residue stretch at 165-395 (WRQLWRVVER…LCDCPGLVMP (231 aa)) folds into the CP-type G domain. Residue 213 to 216 (NKSD) coordinates GTP. Phosphoserine is present on residues Ser276 and Ser279. Residues 344-351 (GYPNVGKS) and 388-391 (DCPG) each bind GTP. The tract at residues 574–606 (LVAGNDPAAKPWRHVKKERREKLRKKFSHLDEH) is disordered. Residues 584 to 600 (PWRHVKKERREKLRKKF) are compositionally biased toward basic residues.

This sequence belongs to the TRAFAC class YlqF/YawG GTPase family. LSG1 subfamily. In terms of tissue distribution, expressed in larval serotonergic neurons.

The protein resides in the cytoplasm. In terms of biological role, GTPase required for the nuclear export of the 60S ribosomal subunit. Probably acts by mediating the release of Nmd3 from the 60S ribosomal subunit after export into the cytoplasm. Regulator of body size; acts in serotonergic neurons to regulate insulin signaling and thus exerts global growth control. The polypeptide is Large subunit GTPase 1 homolog (Ns3) (Drosophila melanogaster (Fruit fly)).